Here is a 78-residue protein sequence, read N- to C-terminus: Esculentin-2Vb (78 aa).

Positions 1-22 (MFTMKKSLLLLFFLGTISLSLC) are cleaved as a signal peptide. The propeptide occupies 23 to 39 (EEERGADEEEGDGEKLM). The cysteines at positions 72 and 78 are disulfide-linked.

Expressed by the skin glands.

The protein localises to the secreted. Functionally, antimicrobial peptide. In Odorrana versabilis (Chinese bamboo leaf odorous frog), this protein is Esculentin-2Vb.